An 81-amino-acid polypeptide reads, in one-letter code: Small ribosomal subunit protein bS16 (81 aa).

Belongs to the bacterial ribosomal protein bS16 family.

The polypeptide is Small ribosomal subunit protein bS16 (Clostridium acetobutylicum (strain ATCC 824 / DSM 792 / JCM 1419 / IAM 19013 / LMG 5710 / NBRC 13948 / NRRL B-527 / VKM B-1787 / 2291 / W)).